The following is a 201-amino-acid chain: FMN-dependent NADH:quinone oxidoreductase (201 aa).

FMN-binding positions include Ser10, 16-18 (SQS), 96-99 (MYNF), and 140-143 (SRGG).

The protein belongs to the azoreductase type 1 family. In terms of assembly, homodimer. FMN is required as a cofactor.

The enzyme catalyses 2 a quinone + NADH + H(+) = 2 a 1,4-benzosemiquinone + NAD(+). The catalysed reaction is N,N-dimethyl-1,4-phenylenediamine + anthranilate + 2 NAD(+) = 2-(4-dimethylaminophenyl)diazenylbenzoate + 2 NADH + 2 H(+). Quinone reductase that provides resistance to thiol-specific stress caused by electrophilic quinones. In terms of biological role, also exhibits azoreductase activity. Catalyzes the reductive cleavage of the azo bond in aromatic azo compounds to the corresponding amines. This Salmonella arizonae (strain ATCC BAA-731 / CDC346-86 / RSK2980) protein is FMN-dependent NADH:quinone oxidoreductase.